The primary structure comprises 252 residues: RNA-binding protein 2 (252 aa).

2 disordered regions span residues 1-34 (MADGFWNRQQQHLPPPGGMLKRPRTEYDTAPSGV) and 232-252 (RLQFSRSPGRRSGGPGPRGKR). An RRM domain is found at 152–238 (STLYVEGLPS…SYLRLQFSRS (87 aa)). A compositionally biased stretch (gly residues) spans 242–252 (RSGGPGPRGKR).

Its function is as follows. Probable RNA-binding protein. In Medicago truncatula (Barrel medic), this protein is RNA-binding protein 2.